Consider the following 120-residue polypeptide: UPF0102 protein HSM_1206 (120 aa).

The protein belongs to the UPF0102 family.

This is UPF0102 protein HSM_1206 from Histophilus somni (strain 2336) (Haemophilus somnus).